A 249-amino-acid chain; its full sequence is Triosephosphate isomerase (249 aa).

The substrate site is built by N12 and K14. K14 is modified (N6-acetyllysine). N16 carries the deamidated asparagine modification. Position 68 is a 3'-nitrotyrosine (Y68). N72 bears the Deamidated asparagine mark. S80 carries the phosphoserine modification. H96 functions as the Electrophile in the catalytic mechanism. The residue at position 106 (S106) is a Phosphoserine. Residue K142 forms a Glycyl lysine isopeptide (Lys-Gly) (interchain with G-Cter in SUMO1) linkage. K149 is subject to N6-succinyllysine. Residue K156 is modified to N6-acetyllysine; alternate. K156 carries the N6-succinyllysine; alternate modification. S159 bears the Phosphoserine mark. Catalysis depends on E166, which acts as the Proton acceptor. Phosphothreonine is present on T173. Position 194 is an N6-acetyllysine; alternate (K194). The residue at position 194 (K194) is an N6-succinyllysine; alternate. Residue K194 is modified to N6-methyllysine; alternate. S198 is subject to Phosphoserine. 3'-nitrotyrosine is present on Y209. Residue S212 is modified to Phosphoserine. T214 is subject to Phosphothreonine. The residue at position 223 (S223) is a Phosphoserine. The residue at position 238 (K238) is an N6-acetyllysine.

This sequence belongs to the triosephosphate isomerase family. In terms of assembly, homodimer. Post-translationally, asn-16 and Asn-72 undergo deamidation which gives rise to four extra negative charges. These are expected to decrease subunit-subunit interactions and so expose the hydrophobic interface to the aqueous environment.

Its subcellular location is the cytoplasm. The enzyme catalyses D-glyceraldehyde 3-phosphate = dihydroxyacetone phosphate. It carries out the reaction dihydroxyacetone phosphate = methylglyoxal + phosphate. The protein operates within carbohydrate degradation; glycolysis; D-glyceraldehyde 3-phosphate from glycerone phosphate: step 1/1. It functions in the pathway carbohydrate biosynthesis; gluconeogenesis. Its function is as follows. Triosephosphate isomerase is an extremely efficient metabolic enzyme that catalyzes the interconversion between dihydroxyacetone phosphate (DHAP) and D-glyceraldehyde-3-phosphate (G3P) in glycolysis and gluconeogenesis. It is also responsible for the non-negligible production of methylglyoxal a reactive cytotoxic side-product that modifies and can alter proteins, DNA and lipids. This Oryctolagus cuniculus (Rabbit) protein is Triosephosphate isomerase (TPI1).